The primary structure comprises 280 residues: MLAILYDRIRPDERMLFERAEALGLPYKKVYVPALPMVLGERPKELEGVTVALERCVSQSRGLAAARYLTALGIPVVNRPEVIEACGDKWATSVALAKAGLPQPKTALATDREEALRLMEAFGYPVVLKPVIGSWGRLLAKVTDRAAAEALLEHKEVLGGFQHQLFYIQEYVEKPGRDIRVFVVGERAIAAIYRRSAHWITNTARGGQAENCPLTEEVARLSVKAAEAVGGGVVAVDLFESERGLLVNEVNHTMEFKNSVHTTGVDIPGEILKYAWSLAS.

ATP-binding positions include Lys89, Lys129, 133 to 139 (GSWGRLL), 169 to 180 (QEYVEKPGRDIR), Arg194, and Asn202. The ATP-grasp domain occupies 93 to 276 (SVALAKAGLP…IPGEILKYAW (184 aa)). Mg(2+) contacts are provided by Asp237, Glu249, and Asn251. The short motif at 258–259 (NS) is the N-[TS] motif that is essential for LysX substrate specificity element.

The protein belongs to the RimK family. LysX subfamily. As to quaternary structure, homodimer. The cofactor is Mg(2+).

It carries out the reaction [amino-group carrier protein]-C-terminal-L-glutamate + L-2-aminoadipate + ATP = [amino-group carrier protein]-C-terminal-N-(1,4-dicarboxybutan-1-yl)-L-glutamine + ADP + phosphate + H(+). It participates in amino-acid biosynthesis; L-lysine biosynthesis via AAA pathway; L-lysine from L-alpha-aminoadipate (Thermus route): step 1/5. Its function is as follows. Catalyzes the ATP-dependent formation of a covalent bond between the amino group of alpha-aminoadipate (AAA) and the gamma-carboxyl group of the C-terminal glutamate residue in LysW. The chain is Alpha-aminoadipate--LysW ligase LysX (lysX) from Thermus thermophilus (strain ATCC 27634 / DSM 579 / HB8).